A 292-amino-acid chain; its full sequence is RNA 5'-monophosphate methyltransferase (292 aa).

A disordered region spans residues 1-20 (MAVPTELHGGSVKETAAEKE). Residues R46, N76, D110, 135–136 (DF), and M164 each bind S-adenosyl-L-methionine. The Bin3-type SAM domain occupies 53 to 274 (ELLRQLFPES…KQTIETHPIP (222 aa)).

It belongs to the methyltransferase superfamily. Interacts with DICER1; the interaction may be mediated by RNA.

The protein localises to the cytoplasm. It catalyses the reaction a 5'-end 5'-phospho-ribonucleoside-RNA + S-adenosyl-L-methionine = a 5'-end (5'-methylphospho)-ribonucleoside-RNA + S-adenosyl-L-homocysteine. The enzyme catalyses a 5'-end 5'-phospho-ribonucleoside-RNA + 2 S-adenosyl-L-methionine = a 5'-end (5'-bismethylphospho)-ribonucleoside-RNA + 2 S-adenosyl-L-homocysteine. O-methyltransferase that specifically monomethylates 5'-monophosphate of cytoplasmic histidyl tRNA (tRNA(His)), acting as a capping enzyme by protecting tRNA(His) from cleavage by DICER1. Also able, with less efficiently, to methylate the 5' monophosphate of a subset of pre-miRNAs, acting as a negative regulator of miRNA processing. The 5' monophosphate of pre-miRNAs is recognized by DICER1 and is required for pre-miRNAs processing: methylation at this position reduces the processing of pre-miRNAs by DICER1. Was also reported to mediate dimethylation of pre-miR-145; however dimethylation cannot be reproduced by another group which observes a monomethylation of pre-miR-145. The protein is RNA 5'-monophosphate methyltransferase (BCDIN3D) of Pongo abelii (Sumatran orangutan).